Consider the following 463-residue polypeptide: Succinate--CoA ligase [ADP-forming] subunit beta, mitochondrial (463 aa).

Residues 1-52 constitute a mitochondrion transit peptide; that stretch reads MAASMFYGRLVAVATLRNHRPRTAQRAAAQVLGSSGLFNNHGLQVQQQQQRN. Residues 61-288 enclose the ATP-grasp domain; sequence MELLQEAGVS…SNSAYRQKKI (228 aa). Lys78 is subject to N6-acetyllysine. The residue at position 84 (Tyr84) is a Phosphotyrosine. Lys88 carries the N6-acetyllysine; alternate modification. Lys88 carries the post-translational modification N6-succinyllysine; alternate. Residues Lys98 and 105 to 107 each bind ATP; that span reads GRG. Lys129, Lys139, Lys143, and Lys216 each carry N6-acetyllysine. Mg(2+)-binding residues include Asn258 and Asp272. Position 279 is a phosphoserine (Ser279). Substrate is bound at residue Asn323. Thr341 is modified (phosphothreonine). Lys368 is modified (N6-acetyllysine). 380–382 contacts substrate; sequence GIM.

The protein belongs to the succinate/malate CoA ligase beta subunit family. ATP-specific subunit beta subfamily. In terms of assembly, heterodimer of an alpha and a beta subunit. The beta subunit determines specificity for ATP. Interacts with ALAS2. Mg(2+) serves as cofactor. Widely expressed. Not expressed in liver and lung.

The protein resides in the mitochondrion. It carries out the reaction succinate + ATP + CoA = succinyl-CoA + ADP + phosphate. It participates in carbohydrate metabolism; tricarboxylic acid cycle; succinate from succinyl-CoA (ligase route): step 1/1. Its activity is regulated as follows. Inhibited by itaconate. Its function is as follows. ATP-specific succinyl-CoA synthetase functions in the citric acid cycle (TCA), coupling the hydrolysis of succinyl-CoA to the synthesis of ATP and thus represents the only step of substrate-level phosphorylation in the TCA. The beta subunit provides nucleotide specificity of the enzyme and binds the substrate succinate, while the binding sites for coenzyme A and phosphate are found in the alpha subunit. The polypeptide is Succinate--CoA ligase [ADP-forming] subunit beta, mitochondrial (Homo sapiens (Human)).